The sequence spans 120 residues: U13-lycotoxin-Ls1a (120 aa).

The signal sequence occupies residues 1–16; it reads MKILFVLISILYAVYC. The propeptide occupies 17–54; that stretch reads FSSEEDVDSAYLANELEPVEDINSEQYAALEPKEEQGR. 4 disulfides stabilise this stretch: C56-C70, C63-C76, C69-C87, and C78-C85. Positions 56 to 95 constitute an Agouti domain; that stretch reads CADMGQDCKDDCDCCLNIATCNCWFGRYFCSCTFGDYQTC.

This sequence belongs to the neurotoxin 05 (agouti) family. Contains 6 disulfide bonds. In terms of tissue distribution, expressed by the venom gland.

The protein localises to the secreted. The polypeptide is U13-lycotoxin-Ls1a (Lycosa singoriensis (Wolf spider)).